The primary structure comprises 533 residues: Calcium-dependent protein kinase 19 (533 aa).

Composition is skewed to polar residues over residues 1-12 (MGSCCSRATSPD) and 24-38 (SHQTKPAQTTPSYNH). Residues 1–53 (MGSCCSRATSPDSGRGGANGYGYSHQTKPAQTTPSYNHPQPPPPAEVRYTPSA) form a disordered region. Glycine 2 is lipidated: N-myristoyl glycine. The Protein kinase domain maps to 85–343 (YSLGKELGRG…SAQVLQHPWL (259 aa)). ATP contacts are provided by residues 91–99 (LGRGQFGVT) and lysine 114. Aspartate 209 serves as the catalytic Proton acceptor. The tract at residues 348–378 (ASDKPIDSAVLSRMKQFRAMNKLKKMALKVI) is autoinhibitory domain. 4 EF-hand domains span residues 385–420 (EEIKGLKQMFTNMDTDNSGTITYEELKAGLAKLGSK), 421–456 (LSEAEVKQLMEAADVDGNGSIDYVEFITATMHRHKL), 457–492 (ERDEHLFKAFQYFDKDNSGFITRDELESALIEHEMG), and 497–527 (IKDIISEVDTDNDGRINYEEFCAMMRGGGMQ). Ca(2+) is bound by residues aspartate 398, aspartate 400, serine 402, threonine 404, glutamate 409, aspartate 434, aspartate 436, asparagine 438, serine 440, glutamate 445, aspartate 470, aspartate 472, serine 474, glutamate 481, aspartate 505, aspartate 507, aspartate 509, arginine 511, and glutamate 516.

This sequence belongs to the protein kinase superfamily. Ser/Thr protein kinase family. CDPK subfamily. Expressed in root tips, leaf veins, mesophyll cells, flower reproductive organs and mature pollen grains.

It localises to the membrane. The catalysed reaction is L-seryl-[protein] + ATP = O-phospho-L-seryl-[protein] + ADP + H(+). It carries out the reaction L-threonyl-[protein] + ATP = O-phospho-L-threonyl-[protein] + ADP + H(+). With respect to regulation, activated by calcium. Autophosphorylation may play an important role in the regulation of the kinase activity. Functionally, may play a role in signal transduction pathways that involve calcium as a second messenger. The protein is Calcium-dependent protein kinase 19 of Oryza sativa subsp. japonica (Rice).